A 615-amino-acid polypeptide reads, in one-letter code: 1-deoxy-D-xylulose-5-phosphate synthase (615 aa).

Residues His-76 and 117–119 (GHS) contribute to the thiamine diphosphate site. A Mg(2+)-binding site is contributed by Asp-148. Thiamine diphosphate is bound by residues 149–150 (GA), Asn-177, Tyr-284, and Glu-365. Residue Asn-177 participates in Mg(2+) binding.

The protein belongs to the transketolase family. DXPS subfamily. In terms of assembly, homodimer. Mg(2+) is required as a cofactor. Requires thiamine diphosphate as cofactor.

It catalyses the reaction D-glyceraldehyde 3-phosphate + pyruvate + H(+) = 1-deoxy-D-xylulose 5-phosphate + CO2. It functions in the pathway metabolic intermediate biosynthesis; 1-deoxy-D-xylulose 5-phosphate biosynthesis; 1-deoxy-D-xylulose 5-phosphate from D-glyceraldehyde 3-phosphate and pyruvate: step 1/1. Functionally, catalyzes the acyloin condensation reaction between C atoms 2 and 3 of pyruvate and glyceraldehyde 3-phosphate to yield 1-deoxy-D-xylulose-5-phosphate (DXP). This Francisella tularensis subsp. holarctica (strain FTNF002-00 / FTA) protein is 1-deoxy-D-xylulose-5-phosphate synthase.